The following is a 1424-amino-acid chain: S-layer protein A (1424 aa).

An N-terminal signal peptide occupies residues 1–24 (MNKLVGLLVSSLFLASILIGIAPA). N-linked (GlcNAc...) asparagine glycosylation is found at asparagine 60, asparagine 70, asparagine 276, asparagine 295, asparagine 342, asparagine 358, asparagine 377, asparagine 468, asparagine 517, asparagine 545, asparagine 559, asparagine 581, asparagine 633, asparagine 714, asparagine 875, asparagine 914, asparagine 955, asparagine 989, asparagine 1018, asparagine 1042, asparagine 1093, asparagine 1134, asparagine 1197, asparagine 1217, asparagine 1252, asparagine 1276, asparagine 1304, and asparagine 1419.

It belongs to the Sulfolobales SlaA family. The mushroom-shaped unit cells of the Sulfolobales' S-layers may consist of three SlaB subunits and six SlaA subunits. Glycosylated. C-terminal glycosylation sites are modified with a heterogeneous family of glycans, with the largest having a composition Glc(1)Man(2)GlcNAc(2) plus 6-sulfoquinovose (QuiS).

It is found in the secreted. It localises to the cell wall. Its subcellular location is the S-layer. In terms of biological role, S-layer large protein. May form the highly ordered outer sheath. The protein is S-layer protein A of Sulfolobus acidocaldarius (strain ATCC 33909 / DSM 639 / JCM 8929 / NBRC 15157 / NCIMB 11770).